A 171-amino-acid polypeptide reads, in one-letter code: Neuronal vesicle trafficking-associated protein 2 (171 aa).

The tract at residues 1–21 is disordered; sequence MVKLNSNPSEKGAKPPSVEDG. Residues 1–71 are Cytoplasmic-facing; it reads MVKLNSNPSE…FRVPKIAEFT (71 aa). A helical; Signal-anchor for type II membrane protein membrane pass occupies residues 72–92; it reads VTILVSLALAFLACIVFLVVY. Residues 93–171 are Lumenal-facing; the sequence is KAFTYDHSCP…EPKPPKTQGH (79 aa).

It belongs to the NSG family.

It localises to the membrane. The protein resides in the golgi apparatus. It is found in the trans-Golgi network membrane. The protein localises to the cell projection. Its subcellular location is the dendrite. It localises to the endosome membrane. The protein resides in the early endosome membrane. It is found in the late endosome membrane. The protein localises to the lysosome lumen. Its subcellular location is the cytoplasmic vesicle membrane. It localises to the golgi stack membrane. The protein resides in the endosome. It is found in the multivesicular body membrane. In Bos taurus (Bovine), this protein is Neuronal vesicle trafficking-associated protein 2.